A 234-amino-acid chain; its full sequence is Purine nucleoside phosphorylase DeoD-type (234 aa).

Histidine 5 provides a ligand contact to a purine D-ribonucleoside. Residues glycine 21, arginine 25, arginine 44, and 88-91 (RVGT) contribute to the phosphate site. Residues 178–180 (EME) and 202–203 (SD) contribute to the a purine D-ribonucleoside site. The active-site Proton donor is aspartate 203.

It belongs to the PNP/UDP phosphorylase family. As to quaternary structure, homohexamer; trimer of homodimers.

The catalysed reaction is a purine D-ribonucleoside + phosphate = a purine nucleobase + alpha-D-ribose 1-phosphate. The enzyme catalyses a purine 2'-deoxy-D-ribonucleoside + phosphate = a purine nucleobase + 2-deoxy-alpha-D-ribose 1-phosphate. Functionally, catalyzes the reversible phosphorolytic breakdown of the N-glycosidic bond in the beta-(deoxy)ribonucleoside molecules, with the formation of the corresponding free purine bases and pentose-1-phosphate. This chain is Purine nucleoside phosphorylase DeoD-type, found in Lactococcus lactis subsp. lactis (strain IL1403) (Streptococcus lactis).